The chain runs to 574 residues: Man(5)GlcNAc(2)-PP-dolichol translocation protein RFT1 (574 aa).

Over 1–24 the chain is Lumenal; the sequence is MAKKNSQLPSTSEQILERSTTGAT. The chain crosses the membrane as a helical span at residues 25–45; it reads FLMMGQLFTKLVTFILNNLLI. Residues 46–48 lie on the Cytoplasmic side of the membrane; that stretch reads RFL. The helical transmembrane segment at 49-69 threads the bilayer; the sequence is SPRIFGITAFLEFIQGTVLFF. Residues 70–110 lie on the Lumenal side of the membrane; sequence SRDAIRLSTLRISDSGNGIIDDDDEEEYQETHYKSKVLQTA. Residues 111–131 form a helical membrane-spanning segment; it reads VNFAYIPFWIGFPLSIGLIAW. The Cytoplasmic portion of the chain corresponds to 132–148; the sequence is QYRNINAYFITLPFFRW. The chain crosses the membrane as a helical span at residues 149 to 169; that stretch reads SIFLIWLSIIVELLSEPFFIV. Residues 170–181 are Lumenal-facing; that stretch reads NQFMLNYAARSR. Residues 182–202 traverse the membrane as a helical segment; sequence FESIAVTTGCIVNFIVVYAVQ. The Cytoplasmic segment spans residues 203–218; it reads QSRYPMGVVTSDIDKE. The helical transmembrane segment at 219-239 threads the bilayer; that stretch reads GIAILAFALGKLAHSITLLAC. At 240–319 the chain is on the lumenal side; sequence YYWDYLKNFK…INSLCTVEEQ (80 aa). Residues 320–340 traverse the membrane as a helical segment; that stretch reads GIYALLSNYGSLLTRLLFAPI. Residues 341–372 are Cytoplasmic-facing; that stretch reads EESLRLFLARLLSSHNPKNLKLSIEVLVNLTR. The chain crosses the membrane as a helical span at residues 373–393; it reads FYIYLSLMIIVFGPANSSFLL. At 394–413 the chain is on the lumenal side; that stretch reads QFLIGSKWSTTSVLDTIRVY. A helical membrane pass occupies residues 414–434; sequence CFYIPFLSLNGIFEAFFQSVA. The Cytoplasmic segment spans residues 435 to 443; sequence TGDQILKHS. Residues 444–464 traverse the membrane as a helical segment; sequence YFMMAFSGIFLLNSWLLIEKL. At 465 to 469 the chain is on the lumenal side; sequence KLSIE. Residues 470 to 490 form a helical membrane-spanning segment; it reads GLILSNIINMVLRILYCGVFL. Residues 491–509 lie on the Cytoplasmic side of the membrane; sequence NKFHRELFTDSSFFFNFKD. A helical membrane pass occupies residues 510-530; it reads FKTVIIAGSTICLLDWWFIGY. At 531 to 532 the chain is on the lumenal side; the sequence is VK. Residues 533–553 form a helical membrane-spanning segment; sequence NLQQFVVNVLFAMGLLALILV. Residues 554–574 are Cytoplasmic-facing; the sequence is KERQTIQSFINKRAVSNSKDV.

Belongs to the RFT1 family.

The protein localises to the endoplasmic reticulum membrane. It participates in protein modification; protein glycosylation. Intramembrane glycolipid transporter that operates in the biosynthetic pathway of dolichol-linked oligosaccharides, the glycan precursors employed in protein asparagine (N)-glycosylation. The sequential addition of sugars to dolichol pyrophosphate produces dolichol-linked oligosaccharides containing fourteen sugars, including two GlcNAcs, nine mannoses and three glucoses. Once assembled, the oligosaccharide is transferred from the lipid to nascent proteins by oligosaccharyltransferases. The assembly of dolichol-linked oligosaccharides begins on the cytosolic side of the endoplasmic reticulum membrane and finishes in its lumen. RFT1 could mediate the translocation of the cytosolically oriented intermediate DolPP-GlcNAc2Man5, produced by ALG11, into the ER lumen where dolichol-linked oligosaccharides assembly continues. However, the intramembrane lipid transporter activity could not be confirmed in vitro. This chain is Man(5)GlcNAc(2)-PP-dolichol translocation protein RFT1, found in Saccharomyces cerevisiae (strain ATCC 204508 / S288c) (Baker's yeast).